We begin with the raw amino-acid sequence, 243 residues long: Nuclear cap-binding protein subunit 2 (243 aa).

MRNA is bound by residues tyrosine 14, tyrosine 37, 106–110 (RVDFD), 117–121 (RQWGR), and 127–128 (QV). Residues 34 to 112 (VTVYVGNMSF…RPIRVDFDWG (79 aa)) form the RRM domain. 2 disordered regions span residues 120–144 (GRGR…GGYG) and 161–243 (GGAF…RRRR). Basic and acidic residues-rich tracts occupy residues 128–138 (VRDEYRTDYDP) and 173–228 (DRGD…REKG).

Belongs to the RRM NCBP2 family. Component of the nuclear cap-binding complex (CBC), a heterodimer composed of ABH1/CBP80 and CBP20 that interacts with m7GpppG-capped RNA.

The protein localises to the nucleus. Its subcellular location is the cytoplasm. In terms of biological role, component of the cap-binding complex (CBC), which binds co-transcriptionally to the 5' cap of pre-mRNAs and is involved in various processes such as pre-mRNA splicing and RNA-mediated gene silencing (RNAi) by microRNAs (miRNAs). The CBC complex is involved in miRNA-mediated RNA interference and is required for primary miRNA processing. In the CBC complex, CBP20 recognizes and binds capped RNAs (m7GpppG-capped RNA) but requires ABH1/CBP80 to stabilize the movement of its N-terminal loop and lock the CBC into a high affinity cap-binding state with the cap structure. CBP20 also plays a role in stabilization of ABH1/CBP80 and ABH1/CBP80 localization to the nucleus. This is Nuclear cap-binding protein subunit 2 (CBP20) from Oryza sativa subsp. japonica (Rice).